We begin with the raw amino-acid sequence, 309 residues long: Porphobilinogen deaminase (309 aa).

Cys244 carries the post-translational modification S-(dipyrrolylmethanemethyl)cysteine.

Belongs to the HMBS family. As to quaternary structure, monomer. Dipyrromethane is required as a cofactor.

The catalysed reaction is 4 porphobilinogen + H2O = hydroxymethylbilane + 4 NH4(+). It participates in porphyrin-containing compound metabolism; protoporphyrin-IX biosynthesis; coproporphyrinogen-III from 5-aminolevulinate: step 2/4. Its function is as follows. Tetrapolymerization of the monopyrrole PBG into the hydroxymethylbilane pre-uroporphyrinogen in several discrete steps. This is Porphobilinogen deaminase from Listeria innocua serovar 6a (strain ATCC BAA-680 / CLIP 11262).